Reading from the N-terminus, the 650-residue chain is Macrolide export ATP-binding/permease protein MacB (650 aa).

The ABC transporter domain occupies 5 to 243 (LELKDIRRSY…AGGTEPVVNT (239 aa)). ATP is bound at residue 41 to 48 (GASGSGKS). Transmembrane regions (helical) follow at residues 273–293 (LLTMLGIIIGIASVVSIVVVG), 523–543 (LFLTLVAVISLVVGGIGVMNI), 554–574 (ANDIPMDVGAGASYVLYHLFF), 580–600 (VLPAVGGALGITLSLLIAFTL), and 613–633 (PLALLLAFLCSTVTGILFGWL).

The protein belongs to the ABC transporter superfamily. Macrolide exporter (TC 3.A.1.122) family. Homodimer. Part of the tripartite efflux system MacAB-TolC, which is composed of an inner membrane transporter, MacB, a periplasmic membrane fusion protein, MacA, and an outer membrane component, TolC. The complex forms a large protein conduit and can translocate molecules across both the inner and outer membranes. Interacts with MacA.

The protein localises to the cell inner membrane. In terms of biological role, part of the tripartite efflux system MacAB-TolC. MacB is a non-canonical ABC transporter that contains transmembrane domains (TMD), which form a pore in the inner membrane, and an ATP-binding domain (NBD), which is responsible for energy generation. Confers resistance against macrolides. This is Macrolide export ATP-binding/permease protein MacB from Shigella dysenteriae serotype 1 (strain Sd197).